The primary structure comprises 195 residues: Glycerol-3-phosphate acyltransferase (195 aa).

The next 5 membrane-spanning stretches (helical) occupy residues 2 to 22 (LWIF…GLFI), 52 to 72 (YGVA…LMAY), 78 to 98 (WIFI…SIFM), 112 to 132 (VFLA…LAVI), and 145 to 165 (FAVA…VPLA).

The protein belongs to the PlsY family. Probably interacts with PlsX.

The protein resides in the cell inner membrane. It carries out the reaction an acyl phosphate + sn-glycerol 3-phosphate = a 1-acyl-sn-glycero-3-phosphate + phosphate. It participates in lipid metabolism; phospholipid metabolism. Catalyzes the transfer of an acyl group from acyl-phosphate (acyl-PO(4)) to glycerol-3-phosphate (G3P) to form lysophosphatidic acid (LPA). This enzyme utilizes acyl-phosphate as fatty acyl donor, but not acyl-CoA or acyl-ACP. This chain is Glycerol-3-phosphate acyltransferase, found in Maridesulfovibrio salexigens (strain ATCC 14822 / DSM 2638 / NCIMB 8403 / VKM B-1763) (Desulfovibrio salexigens).